The chain runs to 44 residues: Photosystem I reaction center subunit IX (44 aa).

Residues 7-27 (YLSVAPVLSTLWFGALAGLLI) traverse the membrane as a helical segment.

It belongs to the PsaJ family.

Its subcellular location is the plastid. It localises to the chloroplast thylakoid membrane. In terms of biological role, may help in the organization of the PsaE and PsaF subunits. This is Photosystem I reaction center subunit IX from Coffea arabica (Arabian coffee).